A 1110-amino-acid polypeptide reads, in one-letter code: MKYNEKKTELSEVGKEVQQFWNDKKIFEKSVETREGNPTFTFYEGPPSANGTPGIHHVMGRTVKDIFCRFKTMQGFQVKRKGGWDTHGLPVELQVEKELGITKEDIGKKITVEQYNQKCREAVMKYKSQWDELTVKMGYWVDLEKPYITFENNYIESVWYLLKEFHQKKLLYKGYTIQPYSPAAGTGLSSHELNQPGTYKDVRDTSAVAQFKLKANPKFADNTYFLAWTTTPWTLPSNSALAVGENIEYVLVSTFNPYTFKPVQVILAKALLGKYFSEKAKDLSLEAYKDGDKLIPFKILQSYKGKDLVGIEYEQLMPYLQPETPAFRVIAGDFVSTEDGTGIVHIAPTFGADDARVAKLAGIPSIVTKDDRGNEYPLVDKRGRFTKEVTDFAGEYVKEAYLTDEEKEAERVKQGRDKYLSVDERISIKLKEANRAFKVEKYEHSYPHCWRTDKPVLYYPLDSWFIKTTAKKERLVELNKTINWKPESTGVGRFGNWLENLVDWNLSRSRYWGTPLPIWRSEDGSEEKCIGSIEELKTEIAKAQKAGIETATDIKDLHRPYVDNIVLVSDSGKPMKRELDLIDVWFDSGAMPYAQWHYPFENKELFNNNYPADFIAEGVDQTRGWFFTLHAISGMLYDKVAFKNVIANGLVLDKNGNKMSKRVGNVVNPFETIDKYGPDATRWYMITNAPPWDNLKFNLDGITEVQRRFFGTLQNTYSFFALYANLDNFTFAEAEIPLAQRTESDRWILSKLQSLVKDVADAYSDYEPTKAGRAIQDFVVDDLSNWYVRLNRKRFWKGEYNADKTAAYQTLYTCLETVAKLGAPIAPFYMDKLFSDLNQVSKKNAVESVHLADFPKVNEAFLDVELEERMSLAQRISSLVHSIRKAQTIKVRQPLSRILIPILQPHLKAQIQAVEDLIKNEVNIKAVEYIEDTSGVVIKTIKPNFKKLGKEYGAKLKEIGNAIAELRAEDITAIERNVFELKLADGTVIPITSEDVEIRSQDIPGWSVASEGGITVALDITLSDDLRKEGIARDVVNRVQNLRKDMGLEVQDKIRITIQKVDELINSALSANQEYICTETQAFSLELVEKLADGKEVEMDEQTLIMKIEK.

Residues 47–57 carry the 'HIGH' region motif; that stretch reads PSANGTPGIHH. A 'KMSKS' region motif is present at residues 658-662; it reads KMSKR. K661 contacts ATP.

The protein belongs to the class-I aminoacyl-tRNA synthetase family. IleS type 2 subfamily. In terms of assembly, monomer. It depends on Zn(2+) as a cofactor.

It is found in the cytoplasm. The catalysed reaction is tRNA(Ile) + L-isoleucine + ATP = L-isoleucyl-tRNA(Ile) + AMP + diphosphate. In terms of biological role, catalyzes the attachment of isoleucine to tRNA(Ile). As IleRS can inadvertently accommodate and process structurally similar amino acids such as valine, to avoid such errors it has two additional distinct tRNA(Ile)-dependent editing activities. One activity is designated as 'pretransfer' editing and involves the hydrolysis of activated Val-AMP. The other activity is designated 'posttransfer' editing and involves deacylation of mischarged Val-tRNA(Ile). The polypeptide is Isoleucine--tRNA ligase (Cytophaga hutchinsonii (strain ATCC 33406 / DSM 1761 / CIP 103989 / NBRC 15051 / NCIMB 9469 / D465)).